The following is a 624-amino-acid chain: Bifunctional 3'-phosphoadenosine 5'-phosphosulfate synthase 1 (624 aa).

At M1 the chain carries N-acetylmethionine. The segment at 1 to 225 is adenylyl-sulfate kinase; that stretch reads MEIPGSLCKK…VVELLQERDI (225 aa). K12 carries the post-translational modification N6-acetyllysine. Residue 62–67 coordinates ATP; the sequence is GAGKTT. Residues 89–92, F101, 106–109, 132–133, K171, and 184–185 each bind adenosine 5'-phosphosulfate; these read DNIR, REEN, IS, and GF. Residues C207, C212, 419–422, 521–525, and A563 each bind ATP; these read QLRN and GRDPA. A sulfate adenylyltransferase region spans residues 234 to 624; the sequence is VKELYVPENK…TEYYKSLEKA (391 aa).

In the N-terminal section; belongs to the APS kinase family. It in the C-terminal section; belongs to the sulfate adenylyltransferase family. Homodimer. Expressed in testis, pancreas, kidney, thymus, prostate, ovary, small intestine, colon, leukocytes and liver. Also expressed in high endothelial venules (HEV) cells and in cartilage.

The catalysed reaction is sulfate + ATP + H(+) = adenosine 5'-phosphosulfate + diphosphate. The enzyme catalyses adenosine 5'-phosphosulfate + ATP = 3'-phosphoadenylyl sulfate + ADP + H(+). The protein operates within sulfur metabolism; sulfate assimilation. With respect to regulation, inhibited by chlorate. The kinase activity is subject to inhibition by the substrate adenylyl sulfate. In terms of biological role, bifunctional enzyme with both ATP sulfurylase and APS kinase activity, which mediates two steps in the sulfate activation pathway. The first step is the transfer of a sulfate group to ATP to yield adenosine 5'-phosphosulfate (APS), and the second step is the transfer of a phosphate group from ATP to APS yielding 3'-phosphoadenylylsulfate (PAPS: activated sulfate donor used by sulfotransferase). In mammals, PAPS is the sole source of sulfate; APS appears to be only an intermediate in the sulfate-activation pathway. Required for normal biosynthesis of sulfated L-selectin ligands in endothelial cells. The chain is Bifunctional 3'-phosphoadenosine 5'-phosphosulfate synthase 1 (PAPSS1) from Homo sapiens (Human).